The sequence spans 418 residues: UPF0261 protein BRA1168/BS1330_II1159 (418 aa).

It belongs to the UPF0261 family.

This Brucella suis biovar 1 (strain 1330) protein is UPF0261 protein BRA1168/BS1330_II1159.